The chain runs to 337 residues: Glyceraldehyde-3-phosphate dehydrogenase (337 aa).

Residues 11-12 (TI) and Gly-110 each bind NAD(+). Residue 139 to 141 (SCN) participates in D-glyceraldehyde 3-phosphate binding. Cys-140 serves as the catalytic Nucleophile. NAD(+) is bound at residue Arg-168. Residue 194–195 (HG) coordinates D-glyceraldehyde 3-phosphate. Gln-301 is a binding site for NAD(+).

The protein belongs to the glyceraldehyde-3-phosphate dehydrogenase family. As to quaternary structure, homotetramer.

Its subcellular location is the cytoplasm. It carries out the reaction D-glyceraldehyde 3-phosphate + phosphate + NADP(+) = (2R)-3-phospho-glyceroyl phosphate + NADPH + H(+). It catalyses the reaction D-glyceraldehyde 3-phosphate + phosphate + NAD(+) = (2R)-3-phospho-glyceroyl phosphate + NADH + H(+). It functions in the pathway carbohydrate degradation; glycolysis; pyruvate from D-glyceraldehyde 3-phosphate: step 1/5. The polypeptide is Glyceraldehyde-3-phosphate dehydrogenase (gap) (Methanothermobacter thermautotrophicus (strain ATCC 29096 / DSM 1053 / JCM 10044 / NBRC 100330 / Delta H) (Methanobacterium thermoautotrophicum)).